The following is a 112-amino-acid chain: Ribonuclease P protein component (112 aa).

The protein belongs to the RnpA family. In terms of assembly, consists of a catalytic RNA component (M1 or rnpB) and a protein subunit.

It catalyses the reaction Endonucleolytic cleavage of RNA, removing 5'-extranucleotides from tRNA precursor.. RNaseP catalyzes the removal of the 5'-leader sequence from pre-tRNA to produce the mature 5'-terminus. It can also cleave other RNA substrates such as 4.5S RNA. The protein component plays an auxiliary but essential role in vivo by binding to the 5'-leader sequence and broadening the substrate specificity of the ribozyme. In Mycoplasmopsis synoviae (strain 53) (Mycoplasma synoviae), this protein is Ribonuclease P protein component.